We begin with the raw amino-acid sequence, 213 residues long: Orotate phosphoribosyltransferase (213 aa).

Residue K26 coordinates 5-phospho-alpha-D-ribose 1-diphosphate. Position 34–35 (34–35 (FF)) interacts with orotate. Residues 72–73 (YK), R99, K100, K103, H105, and 124–132 (DDVITAGTA) each bind 5-phospho-alpha-D-ribose 1-diphosphate. Residues T128 and R156 each contribute to the orotate site.

The protein belongs to the purine/pyrimidine phosphoribosyltransferase family. PyrE subfamily. In terms of assembly, homodimer. It depends on Mg(2+) as a cofactor.

It catalyses the reaction orotidine 5'-phosphate + diphosphate = orotate + 5-phospho-alpha-D-ribose 1-diphosphate. It participates in pyrimidine metabolism; UMP biosynthesis via de novo pathway; UMP from orotate: step 1/2. Catalyzes the transfer of a ribosyl phosphate group from 5-phosphoribose 1-diphosphate to orotate, leading to the formation of orotidine monophosphate (OMP). The sequence is that of Orotate phosphoribosyltransferase from Edwardsiella ictaluri (strain 93-146).